Consider the following 344-residue polypeptide: N-acetyl-gamma-glutamyl-phosphate reductase (344 aa).

Residue Cys-148 is part of the active site.

The protein belongs to the NAGSA dehydrogenase family. Type 1 subfamily.

The protein resides in the cytoplasm. It carries out the reaction N-acetyl-L-glutamate 5-semialdehyde + phosphate + NADP(+) = N-acetyl-L-glutamyl 5-phosphate + NADPH + H(+). It functions in the pathway amino-acid biosynthesis; L-arginine biosynthesis; N(2)-acetyl-L-ornithine from L-glutamate: step 3/4. Functionally, catalyzes the NADPH-dependent reduction of N-acetyl-5-glutamyl phosphate to yield N-acetyl-L-glutamate 5-semialdehyde. The sequence is that of N-acetyl-gamma-glutamyl-phosphate reductase from Clostridium beijerinckii (strain ATCC 51743 / NCIMB 8052) (Clostridium acetobutylicum).